We begin with the raw amino-acid sequence, 90 residues long: Sec-independent protein translocase protein TatA (90 aa).

Residues 1–21 (MGSMSIWHWVIVAVIVMLLFG) form a helical membrane-spanning segment. The disordered stretch occupies residues 44 to 90 (AEDETPPAVQAAPPPAEPVRTIPHATETSPGTAIPASHLPGGERKPV).

It belongs to the TatA/E family. The Tat system comprises two distinct complexes: a TatABC complex, containing multiple copies of TatA, TatB and TatC subunits, and a separate TatA complex, containing only TatA subunits. Substrates initially bind to the TatABC complex, which probably triggers association of the separate TatA complex to form the active translocon.

It localises to the cell inner membrane. Part of the twin-arginine translocation (Tat) system that transports large folded proteins containing a characteristic twin-arginine motif in their signal peptide across membranes. TatA could form the protein-conducting channel of the Tat system. This is Sec-independent protein translocase protein TatA from Methylobacterium radiotolerans (strain ATCC 27329 / DSM 1819 / JCM 2831 / NBRC 15690 / NCIMB 10815 / 0-1).